The chain runs to 717 residues: Amino-acid acetyltransferase, mitochondrial (717 aa).

The transit peptide at 1–23 (MFIWTKAPARGLGKASKILPKRD) directs the protein to the mitochondrion. The segment at 35-70 (KQFHTATTSVRRSSSSAKERQRAERQQLTRLLKESP) is disordered. Over residues 39 to 50 (TATTSVRRSSSS) the composition is skewed to low complexity. Residues 51-70 (AKERQRAERQQLTRLLKESP) show a composition bias toward basic and acidic residues. An N-acetyltransferase domain is found at 518–691 (NPSIELADDP…GDVDDAKKRD (174 aa)).

This sequence belongs to the acetyltransferase family.

It localises to the mitochondrion. It carries out the reaction L-glutamate + acetyl-CoA = N-acetyl-L-glutamate + CoA + H(+). Its pathway is amino-acid biosynthesis; L-arginine biosynthesis; N(2)-acetyl-L-ornithine from L-glutamate: step 1/4. N-acetylglutamate synthase involved in arginine biosynthesis. The chain is Amino-acid acetyltransferase, mitochondrial (arg2) from Pyrenophora tritici-repentis (strain Pt-1C-BFP) (Wheat tan spot fungus).